A 119-amino-acid chain; its full sequence is Large ribosomal subunit protein bL20 (119 aa).

Belongs to the bacterial ribosomal protein bL20 family.

Its function is as follows. Binds directly to 23S ribosomal RNA and is necessary for the in vitro assembly process of the 50S ribosomal subunit. It is not involved in the protein synthesizing functions of that subunit. The protein is Large ribosomal subunit protein bL20 of Bordetella avium (strain 197N).